Consider the following 185-residue polypeptide: MNWRSEHIWIELLKGSRKRGNFFWACILFLGSLGFLAVGASSYLGKNMISVLPSQQILFFPQGVVMSFYGIAGLFISSYLWCTILWNVGSGYDRFDRKEGIVCIFRWGFPGIKRRIFLQFLVRDIQSIRIQVKEGLYPRRILYMEIRGQGVIPLTRTDEKFFTPREIEQKAAELAYFLRVPIEVF.

Transmembrane regions (helical) follow at residues 21-43 (NFFW…ASSY) and 63-85 (GVVM…CTIL).

It belongs to the Ycf4 family.

The protein resides in the plastid. It localises to the chloroplast thylakoid membrane. Its function is as follows. Seems to be required for the assembly of the photosystem I complex. The chain is Photosystem I assembly protein Ycf4 from Saccharum hybrid (Sugarcane).